The chain runs to 201 residues: Twist-related protein 1 (201 aa).

The segment covering 1–18 (MMQDVSSSPVSPADDSLS) has biased composition (low complexity). Positions 1-106 (MMQDVSSSPV…GGGSPQSYEE (106 aa)) are disordered. A compositionally biased stretch (basic residues) spans 34–43 (RGGRKRRSSR). 2 stretches are compositionally biased toward gly residues: residues 46-65 (AGGG…GGDE) and 80-100 (GCGG…GGGS). The bHLH domain occupies 109–160 (TQRVMANVRERQRTQSLNEAFAALPKIIPTLPSDKLSKIQTLKLAARYIDFL). A sufficient for transactivation activity region spans residues 162–190 (QVLQSDELDSKMASYVAHERLSYAFSVWR).

As to quaternary structure, efficient DNA binding requires dimerization with another bHLH protein. Homodimer or heterodimer with E proteins such as TCF3. ID1 binds preferentially to TCF3 but does not interact efficiently with TWIST1 so ID1 levels control the amount of TCF3 available to dimerize with TWIST and thus determine the type of dimer formed.

It is found in the nucleus. Acts as a transcriptional regulator. Inhibits myogenesis by sequestrating E proteins, inhibiting trans-activation by MEF2, and inhibiting DNA-binding by MYOD1 through physical interaction. This interaction probably involves the basic domains of both proteins. Also represses expression of pro-inflammatory cytokines such as TNFA and IL1B. Regulates cranial suture patterning and fusion. Activates transcription as a heterodimer with E proteins. Regulates gene expression differentially, depending on dimer composition. Homodimers induce expression of FGFR2 and POSTN while heterodimers repress FGFR2 and POSTN expression and induce THBS1 expression. Heterodimerization is also required for osteoblast differentiation. Represses the activity of the circadian transcriptional activator: NPAS2-BMAL1 heterodimer. In Pan troglodytes (Chimpanzee), this protein is Twist-related protein 1 (TWIST1).